Reading from the N-terminus, the 421-residue chain is FBD-associated F-box protein At5g56370 (421 aa).

Positions 1–52 constitute an F-box domain; sequence MDSISLLPDDFLLRILSLLPTKDVLNTSVLSKRWRYLWKLVPKLQYSLIDKN. Residues 332-382 form the FBD domain; sequence HWEEPSSVPETLMFVLETLEWRNYRGLKMENELASFLLKHSRRLKIATFSP.

This Arabidopsis thaliana (Mouse-ear cress) protein is FBD-associated F-box protein At5g56370.